The sequence spans 581 residues: Proline--tRNA ligase (581 aa).

This sequence belongs to the class-II aminoacyl-tRNA synthetase family. ProS type 1 subfamily. As to quaternary structure, homodimer.

Its subcellular location is the cytoplasm. It carries out the reaction tRNA(Pro) + L-proline + ATP = L-prolyl-tRNA(Pro) + AMP + diphosphate. Its function is as follows. Catalyzes the attachment of proline to tRNA(Pro) in a two-step reaction: proline is first activated by ATP to form Pro-AMP and then transferred to the acceptor end of tRNA(Pro). As ProRS can inadvertently accommodate and process non-cognate amino acids such as alanine and cysteine, to avoid such errors it has two additional distinct editing activities against alanine. One activity is designated as 'pretransfer' editing and involves the tRNA(Pro)-independent hydrolysis of activated Ala-AMP. The other activity is designated 'posttransfer' editing and involves deacylation of mischarged Ala-tRNA(Pro). The misacylated Cys-tRNA(Pro) is not edited by ProRS. This chain is Proline--tRNA ligase, found in Delftia acidovorans (strain DSM 14801 / SPH-1).